A 1455-amino-acid chain; its full sequence is DNA-directed RNA polymerase subunit beta (1455 aa).

This sequence belongs to the RNA polymerase beta chain family. In terms of assembly, the RNAP catalytic core consists of 2 alpha, 1 beta, 1 beta' and 1 omega subunit. When a sigma factor is associated with the core the holoenzyme is formed, which can initiate transcription.

It carries out the reaction RNA(n) + a ribonucleoside 5'-triphosphate = RNA(n+1) + diphosphate. DNA-dependent RNA polymerase catalyzes the transcription of DNA into RNA using the four ribonucleoside triphosphates as substrates. The sequence is that of DNA-directed RNA polymerase subunit beta from Rhizorhabdus wittichii (strain DSM 6014 / CCUG 31198 / JCM 15750 / NBRC 105917 / EY 4224 / RW1) (Sphingomonas wittichii).